Reading from the N-terminus, the 186-residue chain is Agglutinin isolectin 3 (186 aa).

Q1 is modified (pyrrolidone carboxylic acid). 4 consecutive Chitin-binding type-1 domains span residues 1–42, 43–85, 86–128, and 129–171; these read QRCG…ACWT, SKRC…PCRA, DIKC…ACST, and DKPC…GCDG. 16 cysteine pairs are disulfide-bonded: C3-C18, C12-C24, C17-C31, C35-C40, C46-C61, C55-C67, C60-C74, C78-C83, C89-C104, C98-C110, C103-C117, C121-C126, C132-C147, C141-C153, C146-C160, and C164-C169. 10–12 is a substrate binding site; the sequence is MEC. 62–73 contacts substrate; it reads SQYGHCGFGAEY. 114–115 serves as a coordination point for substrate; it reads SE. Positions 172–186 are excised as a propeptide; it reads VFAEAIATNSTLLAE. The N-linked (GlcNAc...) asparagine glycan is linked to N180.

In terms of assembly, homodimer, u-shaped.

In terms of biological role, N-acetyl-D-glucosamine / N-acetyl-D-neuraminic acid binding lectin. This is Agglutinin isolectin 3 from Triticum aestivum (Wheat).